Here is a 263-residue protein sequence, read N- to C-terminus: tRNA uridine(34) hydroxylase (263 aa).

Positions 129 to 223 (EGREVVTLDT…YFEETDGAFY (95 aa)) constitute a Rhodanese domain. C183 functions as the Cysteine persulfide intermediate in the catalytic mechanism.

The protein belongs to the TrhO family.

The catalysed reaction is uridine(34) in tRNA + AH2 + O2 = 5-hydroxyuridine(34) in tRNA + A + H2O. Its function is as follows. Catalyzes oxygen-dependent 5-hydroxyuridine (ho5U) modification at position 34 in tRNAs. This is tRNA uridine(34) hydroxylase from Delftia acidovorans (strain DSM 14801 / SPH-1).